The sequence spans 201 residues: Recombination protein RecR (201 aa).

Residues 57-72 (CADCRTFTEQEKCNIC) form a C4-type zinc finger. In terms of domain architecture, Toprim spans 81–176 (GQICVVESPA…DASRIAHGVP (96 aa)).

The protein belongs to the RecR family.

May play a role in DNA repair. It seems to be involved in an RecBC-independent recombinational process of DNA repair. It may act with RecF and RecO. The polypeptide is Recombination protein RecR (Cronobacter sakazakii (strain ATCC BAA-894) (Enterobacter sakazakii)).